The sequence spans 165 residues: Shikimate kinase (165 aa).

ATP is bound at residue 11 to 16 (GAGKTT). Threonine 15 contacts Mg(2+). 3 residues coordinate substrate: aspartate 33, arginine 57, and glycine 78. Arginine 116 lines the ATP pocket. Substrate is bound at residue arginine 134.

Belongs to the shikimate kinase family. In terms of assembly, monomer. Requires Mg(2+) as cofactor.

The protein resides in the cytoplasm. The enzyme catalyses shikimate + ATP = 3-phosphoshikimate + ADP + H(+). It participates in metabolic intermediate biosynthesis; chorismate biosynthesis; chorismate from D-erythrose 4-phosphate and phosphoenolpyruvate: step 5/7. Catalyzes the specific phosphorylation of the 3-hydroxyl group of shikimic acid using ATP as a cosubstrate. This chain is Shikimate kinase, found in Bacillus anthracis (strain A0248).